A 373-amino-acid polypeptide reads, in one-letter code: Chaperone protein DnaJ (373 aa).

Positions 5 to 70 (DYYEVLGVAK…QKRAAYDRYG (66 aa)) constitute a J domain. The CR-type zinc finger occupies 133 to 211 (GFDTEIRVPS…CDGVGRTRRN (79 aa)). Residues C146, C149, C163, C166, C185, C188, C199, and C202 each coordinate Zn(2+). CXXCXGXG motif repeat units lie at residues 146 to 153 (CDTCHGSG), 163 to 170 (CRTCGGSG), 185 to 192 (CPTCHGTG), and 199 to 206 (CPSCDGVG).

Belongs to the DnaJ family. As to quaternary structure, homodimer. Zn(2+) serves as cofactor.

Its subcellular location is the cytoplasm. Its function is as follows. Participates actively in the response to hyperosmotic and heat shock by preventing the aggregation of stress-denatured proteins and by disaggregating proteins, also in an autonomous, DnaK-independent fashion. Unfolded proteins bind initially to DnaJ; upon interaction with the DnaJ-bound protein, DnaK hydrolyzes its bound ATP, resulting in the formation of a stable complex. GrpE releases ADP from DnaK; ATP binding to DnaK triggers the release of the substrate protein, thus completing the reaction cycle. Several rounds of ATP-dependent interactions between DnaJ, DnaK and GrpE are required for fully efficient folding. Also involved, together with DnaK and GrpE, in the DNA replication of plasmids through activation of initiation proteins. This is Chaperone protein DnaJ from Bordetella bronchiseptica (strain ATCC BAA-588 / NCTC 13252 / RB50) (Alcaligenes bronchisepticus).